A 218-amino-acid chain; its full sequence is Small ribosomal subunit protein uS3c (218 aa).

The 72-residue stretch at Val47 to Ser118 folds into the KH type-2 domain.

It belongs to the universal ribosomal protein uS3 family. As to quaternary structure, part of the 30S ribosomal subunit.

It is found in the plastid. The protein resides in the chloroplast. The chain is Small ribosomal subunit protein uS3c (rps3) from Barbarea verna (Land cress).